A 95-amino-acid polypeptide reads, in one-letter code: Osteocalcin (95 aa).

The first 23 residues, 1 to 23, serve as a signal peptide directing secretion; it reads MRTIFLLTLLTLAALCLSDLTDA. Positions 24–49 are excised as a propeptide; the sequence is KPSGPESDKAFMSKQEGNKVVNRLRR. The Gla domain occupies 46–92; it reads RLRRYLGASVPSPDPLEPTREQCELNPACDELSDQYGLKTAYKRIYG. Positions 62, 66, 69, and 75 each coordinate Ca(2+). 3 positions are modified to 4-carboxyglutamate: E62, E66, and E69. C68 and C74 are disulfide-bonded.

Belongs to the osteocalcin/matrix Gla protein family. Post-translationally, gamma-carboxyglutamate residues are formed by vitamin K dependent carboxylation by GGCX. These residues are essential for the binding of calcium. Carboxylated in a Ptprv/Esp-dependent process. Decarboxylation promotes the hormone activity. Bone.

Its subcellular location is the secreted. The carboxylated form is one of the main organic components of the bone matrix, which constitutes 1-2% of the total bone protein: it acts as a negative regulator of bone formation and is required to limit bone formation without impairing bone resorption or mineralization. The carboxylated form binds strongly to apatite and calcium. In terms of biological role, the uncarboxylated form acts as a hormone secreted by osteoblasts, which regulates different cellular processes, such as energy metabolism, male fertility and brain development. Regulates of energy metabolism by acting as a hormone favoring pancreatic beta-cell proliferation, insulin secretion and sensitivity and energy expenditure. Uncarboxylated osteocalcin hormone also promotes testosterone production in the testes: acts as a ligand for G protein-coupled receptor GPRC6A at the surface of Leydig cells, initiating a signaling response that promotes the expression of enzymes required for testosterone synthesis in a CREB-dependent manner. Also acts as a regulator of brain development: osteocalcin hormone crosses the blood-brain barrier and acts as a ligand for GPR158 on neurons, initiating a signaling response that prevents neuronal apoptosis in the hippocampus, favors the synthesis of all monoamine neurotransmitters and inhibits that of gamma-aminobutyric acid (GABA). Osteocalcin also crosses the placenta during pregnancy and maternal osteocalcin is required for fetal brain development. In Mus musculus (Mouse), this protein is Osteocalcin.